We begin with the raw amino-acid sequence, 66 residues long: U1-theraphotoxin-Cg1a 1 (66 aa).

The first 21 residues, 1–21, serve as a signal peptide directing secretion; the sequence is MKTSALFVIFGLVLLFCNSFA. Positions 22–29 are excised as a propeptide; it reads AELKTTGR. Disulfide bonds link Cys-31–Cys-46, Cys-38–Cys-51, and Cys-45–Cys-58. At Pro-63 the chain carries Proline amide.

Belongs to the neurotoxin 10 (Hwtx-1) family. 46 (Jztx-7/10/12) subfamily. As to expression, expressed by the venom gland.

The protein resides in the secreted. Functionally, probable ion channel inhibitor. This Chilobrachys guangxiensis (Chinese earth tiger tarantula) protein is U1-theraphotoxin-Cg1a 1.